The chain runs to 158 residues: N-acetylgalactosamine-specific phosphotransferase enzyme IIB component 1 (158 aa).

Residues 1–158 (MTSPNILLTR…PGDQKEQIPD (158 aa)) enclose the PTS EIIB type-4 domain. His17 serves as the catalytic Pros-phosphohistidine intermediate.

The protein localises to the cytoplasm. Functionally, the phosphoenolpyruvate-dependent sugar phosphotransferase system (sugar PTS), a major carbohydrate active -transport system, catalyzes the phosphorylation of incoming sugar substrates concomitantly with their translocation across the cell membrane. This system is involved in N-acetylgalactosamine transport. This Escherichia coli (strain K12) protein is N-acetylgalactosamine-specific phosphotransferase enzyme IIB component 1 (agaB).